Consider the following 554-residue polypeptide: uncharacterized protein (554 aa).

5 helical membrane-spanning segments follow: residues 13 to 31, 36 to 58, 73 to 92, 99 to 121, and 161 to 183; these read SVAH…GVYL, IFGV…HFGF, LILF…FSSF, LNLL…YYLW, and IALG…IIAI. 2 consecutive RCK C-terminal domains span residues 199–281 and 282–366; these read KTQS…FIGK and EVEL…VLGN. The next 4 membrane-spanning stretches (helical) occupy residues 376–395, 405–422, 442–464, and 468–490; these read IVTI…LPIA, LGLA…GRFG, IGIV…QTVV, and GLLY…GAIA.

It belongs to the AAE transporter (TC 2.A.81) family.

The protein localises to the cell membrane. This is an uncharacterized protein from Bacteroides thetaiotaomicron (strain ATCC 29148 / DSM 2079 / JCM 5827 / CCUG 10774 / NCTC 10582 / VPI-5482 / E50).